We begin with the raw amino-acid sequence, 637 residues long: MTYTLLNKIDDPADLRKLDRRQLDTLAEELRAYVLESVSQTGGHLSSNLGTVELTIALHYVFDTPNDRVVWDVGHQSYPHKILTGRRDRMSTLRQYGGISGFPRRAESEYDTFGTAHSSTSISAALGMALGARTRGEKRVGIAVIGDGAMTAGMAFEAMNNAGVYKDLPMLVVLNDNDMSISPPVGMLNKHLARLMSGQFYAATKKGIEKVLSVAPPVLEFAKRLEEHAKGMVVPATLFEEFGFDYVGPIDGHDLESLVPTLQNIRQRALEGHGPQFLHVVTKKGQGYKLAEADPILYHGPGKFNPAEGIRPSAKPSRKTYTQVFGEWLCDMAAADKRLIGVTPAMREGSGMVEFEKRFPDRYYDVGIAEQHAVTFAGGLACEGLKPVVAIYSTFLQRGYDQLIHDVALQNLPVVFALDRAGLVGADGATHAGVYDIPFLRCIPNMMVMVPADENECRQLLTTAFQQDCPTAVRYPRGAGVGVATQPELTALPVGKGEIRREGHARAGQRVAIMAFGSMVHPALTAAEQLDATVANMRFVKPLDVELVKQLAANHDFLVTVEEGATMGGAGSAVLEALAEAGIELPTLVLGLPDKFIDHGDPAHLLSLCGLDAAGIERSVRERFSLTAQPVKVASVA.

Residues H75 and 116–118 (AHS) contribute to the thiamine diphosphate site. Mg(2+) is bound at residue D147. Thiamine diphosphate-binding positions include 148–149 (GA), N177, Y288, and E370. Residue N177 coordinates Mg(2+).

This sequence belongs to the transketolase family. DXPS subfamily. Homodimer. Mg(2+) is required as a cofactor. It depends on thiamine diphosphate as a cofactor.

It catalyses the reaction D-glyceraldehyde 3-phosphate + pyruvate + H(+) = 1-deoxy-D-xylulose 5-phosphate + CO2. The protein operates within metabolic intermediate biosynthesis; 1-deoxy-D-xylulose 5-phosphate biosynthesis; 1-deoxy-D-xylulose 5-phosphate from D-glyceraldehyde 3-phosphate and pyruvate: step 1/1. Catalyzes the acyloin condensation reaction between C atoms 2 and 3 of pyruvate and glyceraldehyde 3-phosphate to yield 1-deoxy-D-xylulose-5-phosphate (DXP). The sequence is that of 1-deoxy-D-xylulose-5-phosphate synthase from Cupriavidus metallidurans (strain ATCC 43123 / DSM 2839 / NBRC 102507 / CH34) (Ralstonia metallidurans).